Here is a 589-residue protein sequence, read N- to C-terminus: MEIPPSPPPETAAYTLTTSSISYTIPKTSLSLLRFPATEPPSFILRNITLTAHPTEILAVVGPSGAGKSTLLDILASKTSPTSGSILLNSIPINPSSYRKISSYVPQHDSFFPLLTVSETFSFAACLLLPNPSIVSETVTSLLSELNLTHLSHTRLAQGLSGGERRRVSIGLSLLHDPCFLLLDEPTSGLDSKSAFDVIHILKSIAVSRQRTVILSIHQPSFKILSIIDRLLLLSKGTVVYHGRLDSLEGFLLFKGFTVPPQLNSLEYAMEILQELRESDGNTDATALPSIENRKQREKQSIVRYRKSRITEISLLARRFWKIIYRTRQLLLTNALEALVVGLVLGTIYINIGIGKAGIEKRFGMFAFTLTFLLSSTTETLPIFINERPILLRETSSGIYRLSSHILANTLVFLPYLFVISIIYSVSVYFLIGLCPTWQAFGYFVLVIWIILLMANSFVLFLSSLAPNYITGTSLVTILLAAFFLFSGYFISKESLPKYWLFMYFFSMYKYALDALLINEYSCLASKCLVWLEEAQTKICMVTGGDVLKKKGLHEKQRWFNVYVLLGFFVLYRVLCFLALLRRVSGSKR.

The 246-residue stretch at 16–261 (LTTSSISYTI…LLFKGFTVPP (246 aa)) folds into the ABC transporter domain. An ATP-binding site is contributed by 62 to 69 (GPSGAGKS). The 211-residue stretch at 311–521 (TEISLLARRF…ALDALLINEY (211 aa)) folds into the ABC transmembrane type-2 domain. Helical transmembrane passes span 335–355 (ALEA…IGIG), 365–385 (MFAF…PIFI), 412–432 (VFLP…YFLI), 441–461 (FGYF…FVLF), 470–490 (ITGT…SGYF), 499–519 (YWLF…LLIN), and 560–580 (FNVY…FLAL).

The protein belongs to the ABC transporter superfamily. ABCG family. Eye pigment precursor importer (TC 3.A.1.204) subfamily.

The protein localises to the membrane. The protein is ABC transporter G family member 8 (ABCG8) of Arabidopsis thaliana (Mouse-ear cress).